The sequence spans 315 residues: ATP synthase gamma chain (315 aa).

The protein belongs to the ATPase gamma chain family. In terms of assembly, F-type ATPases have 2 components, CF(1) - the catalytic core - and CF(0) - the membrane proton channel. CF(1) has five subunits: alpha(3), beta(3), gamma(1), delta(1), epsilon(1). CF(0) has three main subunits: a, b and c.

It is found in the cellular thylakoid membrane. In terms of biological role, produces ATP from ADP in the presence of a proton gradient across the membrane. The gamma chain is believed to be important in regulating ATPase activity and the flow of protons through the CF(0) complex. This is ATP synthase gamma chain from Microcystis aeruginosa (strain NIES-843 / IAM M-2473).